The chain runs to 257 residues: Phosphate import ATP-binding protein PstB (257 aa).

Residues 11 to 252 (LEVRDLNFFY…PQKKATEDYI (242 aa)) form the ABC transporter domain. Residue 43-50 (GPSGCGKS) participates in ATP binding.

It belongs to the ABC transporter superfamily. Phosphate importer (TC 3.A.1.7) family. In terms of assembly, the complex is composed of two ATP-binding proteins (PstB), two transmembrane proteins (PstC and PstA) and a solute-binding protein (PstS).

The protein resides in the cell inner membrane. The enzyme catalyses phosphate(out) + ATP + H2O = ADP + 2 phosphate(in) + H(+). Its function is as follows. Part of the ABC transporter complex PstSACB involved in phosphate import. Responsible for energy coupling to the transport system. This chain is Phosphate import ATP-binding protein PstB, found in Chromobacterium violaceum (strain ATCC 12472 / DSM 30191 / JCM 1249 / CCUG 213 / NBRC 12614 / NCIMB 9131 / NCTC 9757 / MK).